Reading from the N-terminus, the 236-residue chain is Orotidine 5'-phosphate decarboxylase (236 aa).

Substrate is bound by residues D13, K35, 62–71 (DLKFYDIPQT), T123, R184, Q193, G213, and R214. K64 acts as the Proton donor in catalysis.

Belongs to the OMP decarboxylase family. Type 1 subfamily. In terms of assembly, homodimer.

It carries out the reaction orotidine 5'-phosphate + H(+) = UMP + CO2. The protein operates within pyrimidine metabolism; UMP biosynthesis via de novo pathway; UMP from orotate: step 2/2. In terms of biological role, catalyzes the decarboxylation of orotidine 5'-monophosphate (OMP) to uridine 5'-monophosphate (UMP). The sequence is that of Orotidine 5'-phosphate decarboxylase from Coxiella burnetii (strain CbuK_Q154) (Coxiella burnetii (strain Q154)).